Here is a 369-residue protein sequence, read N- to C-terminus: Phosphoribosyl pyrophosphate synthase-associated protein 2 (369 aa).

Residue Met-1 is modified to N-acetylmethionine. Phosphoserine is present on residues Ser-219, Ser-227, and Ser-233.

Belongs to the ribose-phosphate pyrophosphokinase family. Binds to PRPS1 and PRPS2.

Its function is as follows. Seems to play a negative regulatory role in 5-phosphoribose 1-diphosphate synthesis. This is Phosphoribosyl pyrophosphate synthase-associated protein 2 (Prpsap2) from Mus musculus (Mouse).